The following is a 270-amino-acid chain: Ribosomal RNA small subunit methyltransferase A (270 aa).

S-adenosyl-L-methionine contacts are provided by H11, L13, G38, E59, D84, and N109.

The protein belongs to the class I-like SAM-binding methyltransferase superfamily. rRNA adenine N(6)-methyltransferase family. RsmA subfamily.

The protein localises to the cytoplasm. It catalyses the reaction adenosine(1518)/adenosine(1519) in 16S rRNA + 4 S-adenosyl-L-methionine = N(6)-dimethyladenosine(1518)/N(6)-dimethyladenosine(1519) in 16S rRNA + 4 S-adenosyl-L-homocysteine + 4 H(+). In terms of biological role, specifically dimethylates two adjacent adenosines (A1518 and A1519) in the loop of a conserved hairpin near the 3'-end of 16S rRNA in the 30S particle. May play a critical role in biogenesis of 30S subunits. The protein is Ribosomal RNA small subunit methyltransferase A of Crocosphaera subtropica (strain ATCC 51142 / BH68) (Cyanothece sp. (strain ATCC 51142)).